A 397-amino-acid chain; its full sequence is Na(+)/H(+) antiporter NhaA (397 aa).

12 helical membrane-spanning segments follow: residues Ala-14–Leu-34, Asp-36–Tyr-56, Leu-59–Val-79, Ile-95–Ile-115, Gly-125–Gly-145, Ile-154–Phe-174, His-177–Met-197, Ala-204–Val-224, Leu-254–Val-274, Val-292–Val-312, Ile-328–Leu-348, and Leu-365–Cys-385.

This sequence belongs to the NhaA Na(+)/H(+) (TC 2.A.33) antiporter family.

Its subcellular location is the cell inner membrane. The catalysed reaction is Na(+)(in) + 2 H(+)(out) = Na(+)(out) + 2 H(+)(in). Functionally, na(+)/H(+) antiporter that extrudes sodium in exchange for external protons. In Glaesserella parasuis serovar 5 (strain SH0165) (Haemophilus parasuis), this protein is Na(+)/H(+) antiporter NhaA.